Consider the following 347-residue polypeptide: MAKLLLLIFGVFIFVNSQAQTFPTILEKHNSEKITDVFHKGNFQVTNNPIRVKRYEFSAPEPLIIISPKEAGVYPVLLFIHGTMLSNEDYSLFFNYIASHGFIVVAPKLFRLFPPKLPSQQDEIDMAASVANWMPLYLQVVLQRYVTGVEGDLEKLAISGHSRGGKSAFALALGFSNIKLDVTFSALIGVDPVAGRSVDDRTLPHVLTYKPNSFNLSIPVTVIGSGLGNHTISCAPNHVSHQQFYDECKENSSHFVITKYGHMDMLNEFRLSPIAVTMSLMCAQSFRPKATMRRTLGGIMVAFLNAYFRDDGRQYYAIIANRSLAPTNLFAEKKGFNFGFATTYAQL.

Residues 1 to 19 (MAKLLLLIFGVFIFVNSQA) form the signal peptide. Positions 20–30 (QTFPTILEKHN) are excised as a propeptide. The GXSXG motif lies at 160–164 (GHSRG). The active-site Nucleophile is S162. Residue D191 is the Charge relay system of the active site. N-linked (GlcNAc...) asparagine glycans are attached at residues N215, N229, and N251. The Charge relay system role is filled by H262. N-linked (GlcNAc...) asparagine glycosylation is present at N321.

The protein belongs to the AB hydrolase superfamily. Lipase family.

It catalyses the reaction a chlorophyll + H2O = a chlorophyllide + phytol + H(+). The catalysed reaction is chlorophyll a + H2O = phytol + chlorophyllide a + H(+). The protein operates within porphyrin-containing compound metabolism; chlorophyll degradation. Inhibited by diisopropyl fluorophosphate (DFP), phenylmethanesulfonyl fluoride (PMSF) or p-chloromercuribenzoic acid (PCMB), but not by N-ethylmaleimide (NEM) or iodoacetamide. Functionally, catalyzes the hydrolysis of ester bond in chlorophyll to yield chlorophyllide and phytol. This Chenopodium album (Fat hen) protein is Chlorophyllase type 0.